The sequence spans 114 residues: Aspartate 1-decarboxylase (114 aa).

Ser25 serves as the catalytic Schiff-base intermediate with substrate; via pyruvic acid. At Ser25 the chain carries Pyruvic acid (Ser). Thr57 provides a ligand contact to substrate. The Proton donor role is filled by Tyr58. A substrate-binding site is contributed by 73 to 75; sequence GAA.

This sequence belongs to the PanD family. As to quaternary structure, heterooctamer of four alpha and four beta subunits. It depends on pyruvate as a cofactor. Is synthesized initially as an inactive proenzyme, which is activated by self-cleavage at a specific serine bond to produce a beta-subunit with a hydroxyl group at its C-terminus and an alpha-subunit with a pyruvoyl group at its N-terminus.

It is found in the cytoplasm. The enzyme catalyses L-aspartate + H(+) = beta-alanine + CO2. Its pathway is cofactor biosynthesis; (R)-pantothenate biosynthesis; beta-alanine from L-aspartate: step 1/1. Functionally, catalyzes the pyruvoyl-dependent decarboxylation of aspartate to produce beta-alanine. This Thermotoga sp. (strain RQ2) protein is Aspartate 1-decarboxylase.